A 95-amino-acid chain; its full sequence is Integration host factor subunit beta (95 aa).

It belongs to the bacterial histone-like protein family. Heterodimer of an alpha and a beta chain.

Functionally, this protein is one of the two subunits of integration host factor, a specific DNA-binding protein that functions in genetic recombination as well as in transcriptional and translational control. This chain is Integration host factor subunit beta, found in Shewanella halifaxensis (strain HAW-EB4).